The sequence spans 299 residues: UDP-3-O-acyl-N-acetylglucosamine deacetylase (299 aa).

Zn(2+)-binding residues include histidine 75, histidine 232, and aspartate 236. The active-site Proton donor is histidine 259.

Belongs to the LpxC family. Zn(2+) serves as cofactor.

The catalysed reaction is a UDP-3-O-[(3R)-3-hydroxyacyl]-N-acetyl-alpha-D-glucosamine + H2O = a UDP-3-O-[(3R)-3-hydroxyacyl]-alpha-D-glucosamine + acetate. It participates in glycolipid biosynthesis; lipid IV(A) biosynthesis; lipid IV(A) from (3R)-3-hydroxytetradecanoyl-[acyl-carrier-protein] and UDP-N-acetyl-alpha-D-glucosamine: step 2/6. Catalyzes the hydrolysis of UDP-3-O-myristoyl-N-acetylglucosamine to form UDP-3-O-myristoylglucosamine and acetate, the committed step in lipid A biosynthesis. This is UDP-3-O-acyl-N-acetylglucosamine deacetylase from Helicobacter hepaticus (strain ATCC 51449 / 3B1).